The following is an 803-amino-acid chain: Translation initiation factor IF-2 (803 aa).

A compositionally biased stretch (basic and acidic residues) spans 65 to 75; it reads PDKVEEKKEHT. The segment at 65–186 is disordered; that stretch reads PDKVEEKKEH…PKSRKSKTLK (122 aa). Residues 175–185 show a composition bias toward basic residues; sequence NKPKSRKSKTL. In terms of domain architecture, tr-type G spans 300-468; that stretch reads IRPPVVTIMG…ILLTADAALE (169 aa). Residues 309–316 form a G1 region; that stretch reads GHVDHGKT. A GTP-binding site is contributed by 309-316; the sequence is GHVDHGKT. A G2 region spans residues 334-338; the sequence is GITQH. Residues 355 to 358 are G3; that stretch reads DTPG. Residues 355–359 and 409–412 contribute to the GTP site; these read DTPGH and NKID. A G4 region spans residues 409–412; sequence NKID. The segment at 445–447 is G5; the sequence is SAK.

The protein belongs to the TRAFAC class translation factor GTPase superfamily. Classic translation factor GTPase family. IF-2 subfamily.

It is found in the cytoplasm. One of the essential components for the initiation of protein synthesis. Protects formylmethionyl-tRNA from spontaneous hydrolysis and promotes its binding to the 30S ribosomal subunits. Also involved in the hydrolysis of GTP during the formation of the 70S ribosomal complex. The polypeptide is Translation initiation factor IF-2 (Tropheryma whipplei (strain Twist) (Whipple's bacillus)).